A 510-amino-acid chain; its full sequence is Lysine--tRNA ligase (510 aa).

The Mg(2+) site is built by E420 and E427.

The protein belongs to the class-II aminoacyl-tRNA synthetase family. In terms of assembly, homodimer. Mg(2+) is required as a cofactor.

The protein resides in the cytoplasm. It carries out the reaction tRNA(Lys) + L-lysine + ATP = L-lysyl-tRNA(Lys) + AMP + diphosphate. This Vibrio vulnificus (strain CMCP6) protein is Lysine--tRNA ligase.